The following is a 656-amino-acid chain: Nuclear pore complex protein Nup85 (656 aa).

N-acetylmethionine is present on Met1. Residue Lys92 is modified to N6-acetyllysine. Ser223 bears the Phosphoserine mark.

Belongs to the nucleoporin Nup85 family. In terms of assembly, component of the nuclear pore complex (NPC). Component of the NPC Nup107-160 subcomplex, consisting of at least NUP107, NUP98/Nup96, NUP160, NUP133, NUP85, NUP37, NUP43 and SEC13. Interacts with NUP160, NUP133 and SEC13. Interacts with NUP37, NUP107 and NUP43. Interacts with CCR2.

Its subcellular location is the nucleus. The protein localises to the nuclear pore complex. It localises to the chromosome. The protein resides in the centromere. It is found in the kinetochore. Its subcellular location is the cytoplasm. The protein localises to the cytoskeleton. It localises to the spindle. The protein resides in the nucleus membrane. In terms of biological role, essential component of the nuclear pore complex (NPC) that seems to be required for NPC assembly and maintenance. As part of the NPC Nup107-160 subcomplex plays a role in RNA export and in tethering NUP96/Nup98 and NUP153 to the nucleus. The Nup107-160 complex seems to be required for spindle assembly during mitosis. NUP85 is required for membrane clustering of CCL2-activated CCR2. Seems to be involved in CCR2-mediated chemotaxis of monocytes and may link activated CCR2 to the phosphatidyl-inositol 3-kinase-Rac-lammellipodium protrusion cascade. Involved in nephrogenesis. The chain is Nuclear pore complex protein Nup85 (NUP85) from Homo sapiens (Human).